The sequence spans 1271 residues: Breakpoint cluster region protein (1271 aa).

Met1 carries the N-acetylmethionine modification. A kinase region spans residues 1 to 426 (MVDPVGFAEA…DGEGAFHGDA (426 aa)). Positions 28-55 (VGDIEQELERCKASIRRLEQEVNQERFR) form a coiled coil. Residues 67 to 173 (KKSYDRQRWG…GHGQPGADAE (107 aa)) are disordered. The segment covering 87 to 105 (ASEPRASASRPQPAPADGA) has biased composition (low complexity). Position 122 is a phosphoserine (Ser122). The segment covering 123–138 (PGKARPGTARRPGAAA) has biased composition (low complexity). Ser139 bears the Phosphoserine mark. At Tyr177 the chain carries Phosphotyrosine; by HCK. Residues 185–198 (ERGLVKVNDKEVSD) show a composition bias toward basic and acidic residues. Disordered stretches follow at residues 185–247 (ERGL…GDYE), 286–392 (GMME…HKRH), and 416–476 (NDGE…SRDA). The segment at 197 to 385 (SDRISSLGSQ…QSFDSSSPPT (189 aa)) is binding to ABL SH2-domain. Polar residues predominate over residues 199-208 (RISSLGSQAM). Residues Ser202, Ser215, Ser222, and Ser236 each carry the phosphoserine modification. Residue Tyr246 is modified to Phosphotyrosine; by FES. 2 stretches are compositionally biased toward low complexity: residues 346-356 (SSGQSSRVSPS) and 369-382 (SPSQNSQQSFDSSS). Phosphoserine occurs at positions 356, 377, and 382. A Phosphothreonine modification is found at Thr385. Residues 441-451 (DRAEEQRRHQD) show a composition bias toward basic and acidic residues. 2 positions are modified to phosphoserine: Ser459 and Ser463. Arg471 is subject to Omega-N-methylarginine. Ser473 and Ser488 each carry phosphoserine. The region spanning 498-691 (MRKWVLSGIL…QNFLSSINEE (194 aa)) is the DH domain. Tyr554 is modified (phosphotyrosine). Thr641 is subject to Phosphothreonine. At Tyr644 the chain carries Phosphotyrosine. Position 693 is a phosphothreonine (Thr693). A PH domain is found at 708 to 866 (QLLKDSFMVE…WRENIREQQK (159 aa)). The region spanning 893-1020 (HSIPLTINKE…QDRDWQRTVI (128 aa)) is the C2 domain. Phosphoserine is present on Ser894. The Rho-GAP domain occupies 1054-1248 (VKIAVVTKRE…VMSQVQVLLY (195 aa)). Ser1264 carries the phosphoserine modification.

As to quaternary structure, homotetramer. Interacts with PDZK1. May interact with CCPG1. Interacts with FES/FPS, ABL1, PIK3R1 and GRB2. Interacts with HCK. Interacts with SH2D5. Interacts with DLG4. Post-translationally, autophosphorylated. Phosphorylated by FES/FPS on tyrosine residues, leading to down-regulation of the BCR kinase activity. Phosphorylation at Tyr-177 by HCK is important for interaction with GRB2.

It is found in the postsynaptic density. Its subcellular location is the cell projection. The protein localises to the dendritic spine. The protein resides in the axon. It localises to the synapse. The catalysed reaction is L-seryl-[protein] + ATP = O-phospho-L-seryl-[protein] + ADP + H(+). It catalyses the reaction L-threonyl-[protein] + ATP = O-phospho-L-threonyl-[protein] + ADP + H(+). In terms of biological role, protein with a unique structure having two opposing regulatory activities toward small GTP-binding proteins. The C-terminus is a GTPase-activating protein (GAP) domain which stimulates GTP hydrolysis by RAC1, RAC2 and CDC42. Accelerates the intrinsic rate of GTP hydrolysis of RAC1 or CDC42, leading to down-regulation of the active GTP-bound form. The central Dbl homology (DH) domain functions as guanine nucleotide exchange factor (GEF) that modulates the GTPases CDC42, RHOA and RAC1. Promotes the conversion of CDC42, RHOA and RAC1 from the GDP-bound to the GTP-bound form. The amino terminus contains an intrinsic kinase activity. Functions as an important negative regulator of neuronal RAC1 activity. Regulates macrophage functions such as CSF1-directed motility and phagocytosis through the modulation of RAC1 activity. Plays a major role as a RHOA GEF in keratinocytes being involved in focal adhesion formation and keratinocyte differentiation. This Homo sapiens (Human) protein is Breakpoint cluster region protein.